Consider the following 80-residue polypeptide: LSM complex subunit lsm5 (80 aa).

A Sm domain is found at 6 to 79; it reads LPLELIDKCI…MCMLIPGGKP (74 aa).

This sequence belongs to the snRNP Sm proteins family. Component of the heptameric LSM1-LSM7 complex that forms a seven-membered ring structure with a donut shape. The LSm subunits are arranged in the order lsm1, lsm2, lsm3, lsm6, lsm5, lsm7 and lsm4. Component of the heptameric LSM2-LSM8 complex that forms a seven-membered ring structure with a donut shape. The LSm subunits are arranged in the order lsm8, lsm2, lsm3, lsm6, lsm5, lsm7 and lsm4.

It localises to the nucleus. In terms of biological role, component of LSm protein complexes, which are involved in RNA processing and may function in a chaperone-like manner. Component of the cytoplasmic LSM1-LSM7 complex which is involved in mRNA degradation by activating the decapping step. The LSM1-LSM7 complex loads onto the 3'-end of single stranded RNA. Component of the nuclear LSM2-LSM8 complex, which is involved in spliceosome assembly. The LSM2-LSM8 complex plays a role in the biogenesis of the spliceosomal U4/U6-U5 tri-snRNP complex by accelerating prp24-mediated annealing of U4/U6 di-snRNA. The LSM2-LSM8 complex binds U6 snRNA terminating with a cyclic 2',3' phosphate group; RNA with an unmodified 3' hydroxyl or non-cyclic 3' phosphate is bound less tightly. The chain is LSM complex subunit lsm5 (lsm5) from Schizosaccharomyces pombe (strain 972 / ATCC 24843) (Fission yeast).